The following is a 172-amino-acid chain: Translationally-controlled tumor protein homolog (172 aa).

The TCTP domain occupies 1 to 172 (MIIYKDCITE…FKDGLIIEKC (172 aa)).

It belongs to the TCTP family.

The protein localises to the cytoplasm. Its function is as follows. Involved in calcium binding and microtubule stabilization. The chain is Translationally-controlled tumor protein homolog (tpt1) from Xenopus laevis (African clawed frog).